The chain runs to 1124 residues: Translation initiation factor IF-2 (1124 aa).

Over residues 32 to 41 the composition is skewed to low complexity; sequence IAAKSHSSSI. Disordered regions lie at residues 32 to 451 and 480 to 523; these read IAAK…QKVH and LARP…RAAR. Positions 94 to 104 are enriched in polar residues; sequence ATSSSEISQVK. Residues 134 to 173 show a composition bias toward low complexity; the sequence is VNPTTTPTSSPPKTAARPVNAPISRPATPSRPSAPTPRSA. Residues 192–203 show a composition bias toward polar residues; that stretch reads GQTSTSSKATTV. A compositionally biased stretch (low complexity) spans 214–227; it reads SRPQSPAAPGRSAP. Basic and acidic residues-rich tracts occupy residues 235–246 and 261–272; these read SDRKAPKPELVG and PEPEGQRPDKKR. 2 stretches are compositionally biased toward low complexity: residues 274-283 and 411-422; these read GISPRPIGGP and RPAQAPAAGAPR. Basic and acidic residues predominate over residues 425–439; sequence GRPDWDDSAKLEALR. Composition is skewed to basic residues over residues 484-493 and 500-514; these read AKPKSQKKPA and LRKR…RQRR. A tr-type G domain is found at 615–787; sequence RRPPVVTVMG…ILLVTEVEDL (173 aa). The tract at residues 624 to 631 is G1; that stretch reads GHVDHGKT. Residue 624-631 participates in GTP binding; the sequence is GHVDHGKT. Positions 649 to 653 are G2; that stretch reads GITQH. The tract at residues 674-677 is G3; it reads DTPG. GTP contacts are provided by residues 674 to 678 and 728 to 731; these read DTPGH and NKTD. The segment at 728-731 is G4; sequence NKTD. The tract at residues 764 to 766 is G5; it reads SAI.

It belongs to the TRAFAC class translation factor GTPase superfamily. Classic translation factor GTPase family. IF-2 subfamily.

The protein resides in the cytoplasm. Its function is as follows. One of the essential components for the initiation of protein synthesis. Protects formylmethionyl-tRNA from spontaneous hydrolysis and promotes its binding to the 30S ribosomal subunits. Also involved in the hydrolysis of GTP during the formation of the 70S ribosomal complex. This is Translation initiation factor IF-2 from Prochlorococcus marinus (strain MIT 9303).